We begin with the raw amino-acid sequence, 56 residues long: Small ribosomal subunit protein uS14 (56 aa).

The Zn(2+) site is built by Cys-21, Cys-24, Cys-39, and Cys-42.

Belongs to the universal ribosomal protein uS14 family. As to quaternary structure, component of the 40S small ribosomal subunit. Zn(2+) is required as a cofactor.

Its subcellular location is the cytoplasm. It localises to the cytosol. It is found in the rough endoplasmic reticulum. This chain is Small ribosomal subunit protein uS14 (RpS29), found in Drosophila melanogaster (Fruit fly).